The following is a 216-amino-acid chain: Endoplasmic reticulum vesicle protein 25 (216 aa).

Positions 1–20 (MASLKSLLSGFLLLAGAAQA) are cleaved as a signal peptide. The Lumenal portion of the chain corresponds to 21-185 (LKFDLEATSS…TNESTNNRVK (165 aa)). The GOLD domain occupies 36–126 (RRCIRNFVNK…RRHVELDIDI (91 aa)). The chain crosses the membrane as a helical span at residues 186–206 (WFGMATTFLLIALWGWQIMYL). Residues 207 to 216 (RAYFRSKHLI) are Cytoplasmic-facing.

The protein belongs to the EMP24/GP25L family.

Its subcellular location is the endoplasmic reticulum membrane. It is found in the golgi apparatus membrane. Constituent of COPII-coated endoplasmic reticulum-derived transport vesicles. Required for efficient transport of a subset of secretory proteins to the Golgi. Facilitates retrograde transport from the Golgi to the endoplasmic reticulum. The polypeptide is Endoplasmic reticulum vesicle protein 25 (erv-1) (Neurospora crassa (strain ATCC 24698 / 74-OR23-1A / CBS 708.71 / DSM 1257 / FGSC 987)).